A 718-amino-acid polypeptide reads, in one-letter code: Putative aminodeoxychorismate synthase (718 aa).

Residues Q9–Q203 form the Glutamine amidotransferase type-1 domain. C88 serves as the catalytic Nucleophile. Active-site residues include H177 and E179. A PABB component region spans residues F266–K718.

It in the C-terminal section; belongs to the anthranilate synthase component I family.

The protein localises to the cytoplasm. It is found in the nucleus. It catalyses the reaction chorismate + L-glutamine = 4-amino-4-deoxychorismate + L-glutamate. Its pathway is cofactor biosynthesis; tetrahydrofolate biosynthesis; 4-aminobenzoate from chorismate: step 1/2. Functionally, catalyzes the biosynthesis of 4-amino-4-deoxychorismate (ADC) from chorismate and glutamine. Required for the synthesis of 4-aminobenzoate (PABA), an important component in tetrahydrofolate biosynthesis. This chain is Putative aminodeoxychorismate synthase, found in Schizosaccharomyces pombe (strain 972 / ATCC 24843) (Fission yeast).